The following is a 191-amino-acid chain: MISISETAQAHFAKLLADQAQQTNIRVFVVNPGTSQAECGVSYCPEDAVEDSDIRLNFNGFDGVVDAESAPFLEDAEIDFVTDKMGTQLTLKAPNAKARKISGDASLNERVQHMLETEVNPQLANHGGQVSLVEITAAGIAVLQFGGGCNGCSMIDVTLKEGIEKEMIEKFEEITGVADITEHQAGDHSYY.

The [4Fe-4S] cluster site is built by C149 and C152.

This sequence belongs to the NfuA family. In terms of assembly, homodimer. The cofactor is [4Fe-4S] cluster.

In terms of biological role, involved in iron-sulfur cluster biogenesis. Binds a 4Fe-4S cluster, can transfer this cluster to apoproteins, and thereby intervenes in the maturation of Fe/S proteins. Could also act as a scaffold/chaperone for damaged Fe/S proteins. The chain is Fe/S biogenesis protein NfuA from Pseudoalteromonas translucida (strain TAC 125).